Here is a 160-residue protein sequence, read N- to C-terminus: Cyclic pyranopterin monophosphate synthase (160 aa).

Substrate-binding positions include 75–77 and 113–114; these read LCH and ME. Asp-128 is an active-site residue.

This sequence belongs to the MoaC family. Homohexamer; trimer of dimers.

The catalysed reaction is (8S)-3',8-cyclo-7,8-dihydroguanosine 5'-triphosphate = cyclic pyranopterin phosphate + diphosphate. Its pathway is cofactor biosynthesis; molybdopterin biosynthesis. In terms of biological role, catalyzes the conversion of (8S)-3',8-cyclo-7,8-dihydroguanosine 5'-triphosphate to cyclic pyranopterin monophosphate (cPMP). The chain is Cyclic pyranopterin monophosphate synthase from Sodalis glossinidius (strain morsitans).